The following is a 198-amino-acid chain: Remorin (198 aa).

The span at 1-11 (MAELEAKKVEI) shows a compositional bias: basic and acidic residues. A disordered region spans residues 1–24 (MAELEAKKVEIVDPAPPAPGPVEA). Positions 97-184 (EESEKSKAEN…LKAEELAAKY (88 aa)) form a coiled coil.

This sequence belongs to the remorin family. In terms of processing, the N-terminus is blocked. Phosphorylated.

It localises to the cell membrane. Functionally, binds to both simple and complex galacturonides. May be involved in cell-to-cell signaling and molecular transport. This chain is Remorin, found in Solanum tuberosum (Potato).